A 50-amino-acid polypeptide reads, in one-letter code: Thymosin beta-4 (50 aa).

The disordered stretch occupies residues M1 to S50. At S8 the chain carries Phosphoserine. Over residues D9–E31 the composition is skewed to basic and acidic residues. K10 carries the N6-acetyllysine modification. The residue at position 18 (K18) is an N6-acetyllysine; alternate. K18 participates in a covalent cross-link: Glycyl lysine isopeptide (Lys-Gly) (interchain with G-Cter in SUMO2); alternate. Phosphothreonine is present on T29. K32 is modified (N6-acetyllysine). S37 carries the post-translational modification Phosphoserine. Residue K38 is modified to N6-acetyllysine. Over residues E39–S50 the composition is skewed to basic and acidic residues. Position 40 is a phosphothreonine (T40). An N6-acetyllysine modification is found at K45.

The protein belongs to the thymosin beta family. Identified in a complex composed of ACTA1, COBL, GSN AND TMSB4X. Interacts with SERPINB1. AcSDKP is inactivated by ACE, which removes the dipeptide Lys-Pro from its C-terminus. In terms of tissue distribution, originally found in thymus but it is widely distributed in many tissues.

The protein localises to the cytoplasm. The protein resides in the cytoskeleton. Plays an important role in the organization of the cytoskeleton. Binds to and sequesters actin monomers (G actin) and therefore inhibits actin polymerization. In terms of biological role, potent inhibitor of bone marrow derived stem cell differentiation. Acts by inhibits the entry of hematopoietic pluripotent stem cells into the S-phase. This Mus musculus (Mouse) protein is Thymosin beta-4 (Tmsb4x).